A 465-amino-acid polypeptide reads, in one-letter code: Serine/threonine-protein kinase AtPK1/AtPK6 (465 aa).

Residues 91–96 carry the LVxCxE motif motif; the sequence is LVECLE. A Protein kinase domain is found at 134-389; sequence FEVMKVVGKG…AEEIKQHKWF (256 aa). ATP is bound by residues 140 to 148 and Lys163; that span reads VGKGAFGKV. Asp257 (proton acceptor) is an active-site residue. Residues 275 to 301 form an activation loop region; the sequence is DFGLAKEFEENTRSNSMCGTTEYMAPE. Ser290 bears the Phosphoserine; by PDPK1 mark. The AGC-kinase C-terminal domain occupies 390 to 460; it reads KGINWKKLEA…VRPPPSFLHQ (71 aa). Thr449 carries the phosphothreonine; by TOR modification.

The protein belongs to the protein kinase superfamily. AGC Ser/Thr protein kinase family. S6 kinase subfamily. In terms of assembly, interacts with RAPTOR1. Interacts with RBR1-E2FB complex through its LVxCxE motif. Interacts with TAP46. Binds to MRF1. In terms of processing, undergoes serine-specific autophosphorylation. Phosphorylated at Thr-449 by TOR. Expressed in all tissues.

The protein localises to the cytoplasm. It is found in the nucleus. It carries out the reaction L-seryl-[protein] + ATP = O-phospho-L-seryl-[protein] + ADP + H(+). The enzyme catalyses L-threonyl-[protein] + ATP = O-phospho-L-threonyl-[protein] + ADP + H(+). With respect to regulation, activated by PDK1. Repressed during osmotic stress. In terms of biological role, downstream effector of TOR signaling pathway involved in osmotic stress response. Could be involved in the control of plant growth and development. Phosphorylates the ribosomal proteins P14, P16 and S6. Functions as a repressor of cell proliferation and required for maintenance of chromosome stability and ploidy levels through the RBR1-E2F pathway. Mediates the phosphorylation of MRFs (e.g. MRF1). The polypeptide is Serine/threonine-protein kinase AtPK1/AtPK6 (Arabidopsis thaliana (Mouse-ear cress)).